The sequence spans 85 residues: Progonadoliberin-2 (85 aa).

An N-terminal signal peptide occupies residues 1–23; sequence MCVSRLVLLFGLLLCVGAQLSNA. Gln24 is subject to Pyrrolidone carboxylic acid. Gly33 carries the post-translational modification Glycine amide.

This sequence belongs to the GnRH family.

The protein localises to the secreted. Functionally, stimulates the secretion of gonadotropins. In Morone saxatilis (Striped bass), this protein is Progonadoliberin-2 (gnrh2).